A 429-amino-acid chain; its full sequence is Glutamate-1-semialdehyde 2,1-aminomutase (429 aa).

Lys-267 is subject to N6-(pyridoxal phosphate)lysine.

It belongs to the class-III pyridoxal-phosphate-dependent aminotransferase family. HemL subfamily. Homodimer. The cofactor is pyridoxal 5'-phosphate.

It localises to the cytoplasm. It carries out the reaction (S)-4-amino-5-oxopentanoate = 5-aminolevulinate. It functions in the pathway porphyrin-containing compound metabolism; protoporphyrin-IX biosynthesis; 5-aminolevulinate from L-glutamyl-tRNA(Glu): step 2/2. This Stenotrophomonas maltophilia (strain K279a) protein is Glutamate-1-semialdehyde 2,1-aminomutase.